A 208-amino-acid polypeptide reads, in one-letter code: Small ribosomal subunit protein uS5 (208 aa).

Residues 1–21 (MSDREQRDGGRSAENNNDRKG) show a composition bias toward basic and acidic residues. Positions 1-38 (MSDREQRDGGRSAENNNDRKGRNNGRRNDRRNHQDNER) are disordered. An S5 DRBM domain is found at 41–104 (YIERVVTINR…EEARKNFFRV (64 aa)).

This sequence belongs to the universal ribosomal protein uS5 family. Part of the 30S ribosomal subunit. Contacts proteins S4 and S8.

With S4 and S12 plays an important role in translational accuracy. Its function is as follows. Located at the back of the 30S subunit body where it stabilizes the conformation of the head with respect to the body. This is Small ribosomal subunit protein uS5 from Corynebacterium aurimucosum (strain ATCC 700975 / DSM 44827 / CIP 107346 / CN-1) (Corynebacterium nigricans).